A 193-amino-acid chain; its full sequence is Orotate phosphoribosyltransferase (193 aa).

5-phospho-alpha-D-ribose 1-diphosphate-binding positions include R107, K108, K111, H113, and 133–141; that span reads EDVITSGGS. Residues T137 and R165 each coordinate orotate.

Belongs to the purine/pyrimidine phosphoribosyltransferase family. PyrE subfamily. In terms of assembly, homodimer. Mg(2+) serves as cofactor.

The enzyme catalyses orotidine 5'-phosphate + diphosphate = orotate + 5-phospho-alpha-D-ribose 1-diphosphate. The protein operates within pyrimidine metabolism; UMP biosynthesis via de novo pathway; UMP from orotate: step 1/2. Catalyzes the transfer of a ribosyl phosphate group from 5-phosphoribose 1-diphosphate to orotate, leading to the formation of orotidine monophosphate (OMP). This chain is Orotate phosphoribosyltransferase, found in Rhodopirellula baltica (strain DSM 10527 / NCIMB 13988 / SH1).